The following is a 147-amino-acid chain: Ribonuclease pancreatic gamma-type (147 aa).

The N-terminal stretch at methionine 1–glycine 25 is a signal peptide. 2 residues coordinate substrate: lysine 35 and arginine 38. Catalysis depends on histidine 40, which acts as the Proton acceptor. 4 cysteine pairs are disulfide-bonded: cysteine 54–cysteine 112, cysteine 68–cysteine 123, cysteine 86–cysteine 138, and cysteine 93–cysteine 100. Substrate contacts are provided by residues lysine 69–threonine 73, lysine 94, and arginine 113. Residue histidine 142 is the Proton donor of the active site.

This sequence belongs to the pancreatic ribonuclease family. As to quaternary structure, monomer.

The protein resides in the secreted. The enzyme catalyses an [RNA] containing cytidine + H2O = an [RNA]-3'-cytidine-3'-phosphate + a 5'-hydroxy-ribonucleotide-3'-[RNA].. It catalyses the reaction an [RNA] containing uridine + H2O = an [RNA]-3'-uridine-3'-phosphate + a 5'-hydroxy-ribonucleotide-3'-[RNA].. Endonuclease that catalyzes the cleavage of RNA on the 3' side of pyrimidine nucleotides. Acts on single-stranded and double-stranded RNA. This is Ribonuclease pancreatic gamma-type from Rattus rattus (Black rat).